Consider the following 413-residue polypeptide: Serine hydroxymethyltransferase (413 aa).

(6S)-5,6,7,8-tetrahydrofolate is bound by residues L118 and G122–L124. The residue at position 228 (K228) is an N6-(pyridoxal phosphate)lysine.

It belongs to the SHMT family. As to quaternary structure, homodimer. The cofactor is pyridoxal 5'-phosphate.

It localises to the cytoplasm. The catalysed reaction is (6R)-5,10-methylene-5,6,7,8-tetrahydrofolate + glycine + H2O = (6S)-5,6,7,8-tetrahydrofolate + L-serine. It participates in one-carbon metabolism; tetrahydrofolate interconversion. The protein operates within amino-acid biosynthesis; glycine biosynthesis; glycine from L-serine: step 1/1. In terms of biological role, catalyzes the reversible interconversion of serine and glycine with tetrahydrofolate (THF) serving as the one-carbon carrier. This reaction serves as the major source of one-carbon groups required for the biosynthesis of purines, thymidylate, methionine, and other important biomolecules. Also exhibits THF-independent aldolase activity toward beta-hydroxyamino acids, producing glycine and aldehydes, via a retro-aldol mechanism. The polypeptide is Serine hydroxymethyltransferase (Phytoplasma australiense).